The following is a 121-amino-acid chain: Large ribosomal subunit protein bL12 (121 aa).

It belongs to the bacterial ribosomal protein bL12 family. As to quaternary structure, homodimer. Part of the ribosomal stalk of the 50S ribosomal subunit. Forms a multimeric L10(L12)X complex, where L10 forms an elongated spine to which 2 to 4 L12 dimers bind in a sequential fashion. Binds GTP-bound translation factors.

Its function is as follows. Forms part of the ribosomal stalk which helps the ribosome interact with GTP-bound translation factors. Is thus essential for accurate translation. The polypeptide is Large ribosomal subunit protein bL12 (Leuconostoc citreum (strain KM20)).